We begin with the raw amino-acid sequence, 187 residues long: Small ribosomal subunit protein uS5 (187 aa).

A disordered region spans residues 1-20; the sequence is MAERENRRDRRDDRSREETP. The S5 DRBM domain maps to 22–85; the sequence is FADRLVAINR…EQAKRQMIRV (64 aa). The interval 154-174 is disordered; it reads DGLKRESSPRQVAQRRGKKVA.

The protein belongs to the universal ribosomal protein uS5 family. In terms of assembly, part of the 30S ribosomal subunit. Contacts proteins S4 and S8.

Its function is as follows. With S4 and S12 plays an important role in translational accuracy. Located at the back of the 30S subunit body where it stabilizes the conformation of the head with respect to the body. The protein is Small ribosomal subunit protein uS5 of Cereibacter sphaeroides (strain ATCC 17025 / ATH 2.4.3) (Rhodobacter sphaeroides).